A 296-amino-acid chain; its full sequence is Nucleotide-binding protein spyM18_0713 (296 aa).

Residue 13-20 (GMSGAGKT) participates in ATP binding. GTP is bound at residue 63 to 66 (DMRS).

Belongs to the RapZ-like family.

Functionally, displays ATPase and GTPase activities. In Streptococcus pyogenes serotype M18 (strain MGAS8232), this protein is Nucleotide-binding protein spyM18_0713.